Here is a 315-residue protein sequence, read N- to C-terminus: MMIGENKNRPHPTIHIPQWDQINDPTATISSPFSSVNLNSVNDYPHSPSPYLDSFASLFRYLPSNELTNDSDSSSGDESSPLTDSFSSDEFRIYEFKIRRCARGRSHDWTECPFAHPGEKARRRDPRKFHYSGTACPEFRKGSCRRGDSCEFSHGVFECWLHPSRYRTQPCKDGTSCRRRICFFAHTTEQLRVLPCSLDPDLGFFSGLATSPTSILVSPSFSPPSESPPLSPSTGELIASMRKMQLNGGGCSWSSPMRSAVRLPFSSSLRPIQAATWPRIREFEIEEAPAMEFVESGKELRAEMYARLSRENSLG.

Residues 1–21 form a disordered region; the sequence is MMIGENKNRPHPTIHIPQWDQ. 2 C3H1-type zinc fingers span residues 131–157 and 165–189; these read YSGT…HGVF and RYRT…HTTE.

The polypeptide is Zinc finger CCCH domain-containing protein 23 (Arabidopsis thaliana (Mouse-ear cress)).